Here is a 348-residue protein sequence, read N- to C-terminus: MGKDYYKILGIPSGANEDEIKKAYRKMALKYHPDKNKEPNAEEKFKEIAEAYDVLSDPKKRGLYDQYGEEGLKTGGGSSGGSSGSFHYTFHGDPHATFASFFGGSNPFDIFFASSRSARPFSGFDPDDMDVDEDDDPFGAFGRFGFNGLSRGPRRAPEPLYPRRKVQDPPVVHELRVSLEEIYHGSTKRMKITRRRLNPDGRTVRTEDKILHIVIKRGWKEGTKITFPKEGDATPDNIPADIVFVLKDKPHAHFRRDGTNVLYSALISLKEALCGCTVNIPTIDGRVIPLPCNDVIKPGTVKRLRGEGLPFPKVPTQRGDLIVEFKVRFPDRLTPQTRQILKQHLPCS.

Residues 4 to 68 (DYYKILGIPS…KKRGLYDQYG (65 aa)) form the J domain.

This Bos taurus (Bovine) protein is DnaJ homolog subfamily B member 5 (DNAJB5).